Consider the following 341-residue polypeptide: MVREEVAGSTQTLQWKCVESRVDSKRLYYGRFILSPLRKGQADTVGIALRRALLGEIEGTCIARAKFGSVPHEYSTIAGIEESVQEILLNLKEIVLRSNLYGVRDASICVKGPRYITAQDIILPPSVEIVDTSQPIANLTEPIDFCIELQIKRDRGYQTELRKNYQDGSYPIDAVSMPVRNVNYSIFSCGNGNEKHEILFLEIWTNGSLTPKEALYEASRNLIDLFLPFLHAEEEGTSFEENKNRFTPPLFTFQKRLTNLNLKKNKKGIPLNCIFIDQLELPSRTYNCLKRANIHTLLDLLSKTEEDLMRIDSFHMEDGKQIWDTLEKYLPIDLLKNKLSF.

The segment at 1–233 (MVREEVAGST…DLFLPFLHAE (233 aa)) is alpha N-terminal domain (alpha-NTD). The tract at residues 269–341 (IPLNCIFIDQ…IDLLKNKLSF (73 aa)) is alpha C-terminal domain (alpha-CTD).

Belongs to the RNA polymerase alpha chain family. In plastids the minimal PEP RNA polymerase catalytic core is composed of four subunits: alpha, beta, beta', and beta''. When a (nuclear-encoded) sigma factor is associated with the core the holoenzyme is formed, which can initiate transcription.

It localises to the plastid. The protein localises to the chloroplast. The catalysed reaction is RNA(n) + a ribonucleoside 5'-triphosphate = RNA(n+1) + diphosphate. Its function is as follows. DNA-dependent RNA polymerase catalyzes the transcription of DNA into RNA using the four ribonucleoside triphosphates as substrates. The polypeptide is DNA-directed RNA polymerase subunit alpha (Lolium perenne (Perennial ryegrass)).